Reading from the N-terminus, the 158-residue chain is Ribosome maturation factor RimP (158 aa).

This sequence belongs to the RimP family.

It is found in the cytoplasm. Functionally, required for maturation of 30S ribosomal subunits. The chain is Ribosome maturation factor RimP from Streptococcus uberis (strain ATCC BAA-854 / 0140J).